We begin with the raw amino-acid sequence, 264 residues long: Diphthine synthase (264 aa).

S-adenosyl-L-methionine is bound by residues Leu10, Asp87, Val90, 115–116 (SI), Leu166, Ala209, and His234.

Belongs to the diphthine synthase family. As to quaternary structure, homodimer.

It carries out the reaction 2-[(3S)-amino-3-carboxypropyl]-L-histidyl-[translation elongation factor 2] + 3 S-adenosyl-L-methionine = diphthine-[translation elongation factor 2] + 3 S-adenosyl-L-homocysteine + 3 H(+). It participates in protein modification; peptidyl-diphthamide biosynthesis. Functionally, S-adenosyl-L-methionine-dependent methyltransferase that catalyzes the trimethylation of the amino group of the modified target histidine residue in translation elongation factor 2 (EF-2), to form an intermediate called diphthine. The three successive methylation reactions represent the second step of diphthamide biosynthesis. This Thermococcus kodakarensis (strain ATCC BAA-918 / JCM 12380 / KOD1) (Pyrococcus kodakaraensis (strain KOD1)) protein is Diphthine synthase.